Consider the following 475-residue polypeptide: MNTALAQQIANEGGVEAWMIAQQHKSLLRFLTCGSVDDGKSTLIGRLLHDTRQIYEDQLSSLHNDSKRHGTQGEKLDLALLVDGLQAEREQGITIDVAYRYFSTEKRKFIIADTPGHEQYTRNMATGASTCELAILLIDARKGVLDQTRRHSFISTLLGIKHLVVAINKMDLVDYSEETFTRIRKDYLTFAEQLPGNLDIRFVPLSALEGDNVASQSESMPWYSGPTLLEVLETVEIQRVVDAQPMRFPVQYVNRPNLDFRGYAGTLASGRVEVGQRVKVLPSGVESNVARIVTFDGDHEEAFAGEAITLVLTDEIDISRGDLLLAADEALPAVQSASVDVVWMAEQPLSPGQSYDIKIAGKKTRARVDGIRYQVDINNLTQREVENLPLNGIGLVDLTFDEPLVLDRYQQNPVTGGLIFIDRLSNVTVGAGMVHEPVSQATAAPSEFSAFELELNALVRRHFSHWGARDLLGDK.

Residues 25-239 enclose the tr-type G domain; it reads KSLLRFLTCG…EVLETVEIQR (215 aa). A G1 region spans residues 34-41; that stretch reads GSVDDGKS. 34–41 is a binding site for GTP; that stretch reads GSVDDGKS. Residues 92-96 form a G2 region; that stretch reads GITID. Residues 113-116 are G3; the sequence is DTPG. GTP is bound by residues 113–117 and 168–171; these read DTPGH and NKMD. Positions 168-171 are G4; that stretch reads NKMD. The interval 206–208 is G5; the sequence is SAL.

Belongs to the TRAFAC class translation factor GTPase superfamily. Classic translation factor GTPase family. CysN/NodQ subfamily. In terms of assembly, heterodimer composed of CysD, the smaller subunit, and CysN.

It catalyses the reaction sulfate + ATP + H(+) = adenosine 5'-phosphosulfate + diphosphate. Its pathway is sulfur metabolism; hydrogen sulfide biosynthesis; sulfite from sulfate: step 1/3. In terms of biological role, with CysD forms the ATP sulfurylase (ATPS) that catalyzes the adenylation of sulfate producing adenosine 5'-phosphosulfate (APS) and diphosphate, the first enzymatic step in sulfur assimilation pathway. APS synthesis involves the formation of a high-energy phosphoric-sulfuric acid anhydride bond driven by GTP hydrolysis by CysN coupled to ATP hydrolysis by CysD. The polypeptide is Sulfate adenylyltransferase subunit 1 (Escherichia coli (strain SE11)).